The following is a 332-amino-acid chain: Glycerol-3-phosphate dehydrogenase [NAD(P)+] (332 aa).

The NADPH site is built by S11, F12, R32, and K106. Sn-glycerol 3-phosphate is bound by residues K106, G134, and S136. An NADPH-binding site is contributed by A138. Sn-glycerol 3-phosphate-binding residues include K189, D242, S252, R253, and N254. K189 (proton acceptor) is an active-site residue. R253 serves as a coordination point for NADPH. 2 residues coordinate NADPH: V277 and E279.

Belongs to the NAD-dependent glycerol-3-phosphate dehydrogenase family.

It is found in the cytoplasm. It carries out the reaction sn-glycerol 3-phosphate + NAD(+) = dihydroxyacetone phosphate + NADH + H(+). It catalyses the reaction sn-glycerol 3-phosphate + NADP(+) = dihydroxyacetone phosphate + NADPH + H(+). Its pathway is membrane lipid metabolism; glycerophospholipid metabolism. Functionally, catalyzes the reduction of the glycolytic intermediate dihydroxyacetone phosphate (DHAP) to sn-glycerol 3-phosphate (G3P), the key precursor for phospholipid synthesis. The polypeptide is Glycerol-3-phosphate dehydrogenase [NAD(P)+] (Clostridium acetobutylicum (strain ATCC 824 / DSM 792 / JCM 1419 / IAM 19013 / LMG 5710 / NBRC 13948 / NRRL B-527 / VKM B-1787 / 2291 / W)).